Reading from the N-terminus, the 102-residue chain is RNA-binding protein Hfq (102 aa).

In terms of domain architecture, Sm spans 9-68 (DPFLNALRRERVPVSIYLVNGIKLQGQIESFDQFVILLKNTVSQMVYKHAISTVVPSRPV). Positions 65 to 102 (SRPVSHHSSNTSVGASVGNYHSGGVSAPAAQQESDGTE) are disordered. The span at 93–102 (AAQQESDGTE) shows a compositional bias: polar residues.

Belongs to the Hfq family. In terms of assembly, homohexamer.

In terms of biological role, RNA chaperone that binds small regulatory RNA (sRNAs) and mRNAs to facilitate mRNA translational regulation in response to envelope stress, environmental stress and changes in metabolite concentrations. Also binds with high specificity to tRNAs. The chain is RNA-binding protein Hfq from Photorhabdus laumondii subsp. laumondii (strain DSM 15139 / CIP 105565 / TT01) (Photorhabdus luminescens subsp. laumondii).